Here is a 241-residue protein sequence, read N- to C-terminus: Phosphoribosylaminoimidazole-succinocarboxamide synthase (241 aa).

Belongs to the SAICAR synthetase family.

The catalysed reaction is 5-amino-1-(5-phospho-D-ribosyl)imidazole-4-carboxylate + L-aspartate + ATP = (2S)-2-[5-amino-1-(5-phospho-beta-D-ribosyl)imidazole-4-carboxamido]succinate + ADP + phosphate + 2 H(+). The protein operates within purine metabolism; IMP biosynthesis via de novo pathway; 5-amino-1-(5-phospho-D-ribosyl)imidazole-4-carboxamide from 5-amino-1-(5-phospho-D-ribosyl)imidazole-4-carboxylate: step 1/2. This is Phosphoribosylaminoimidazole-succinocarboxamide synthase (purC) from Bacillus subtilis (strain 168).